The primary structure comprises 600 residues: Aspartate--tRNA(Asp/Asn) ligase (600 aa).

Residue Glu174 coordinates L-aspartate. An aspartate region spans residues 198 to 201 (QLFK). Arg220 contributes to the L-aspartate binding site. Residues 220–222 (RDE) and Gln229 contribute to the ATP site. An L-aspartate-binding site is contributed by His457. Residue Glu491 coordinates ATP. L-aspartate is bound at residue Arg498. Residue 543–546 (GLDR) participates in ATP binding.

This sequence belongs to the class-II aminoacyl-tRNA synthetase family. Type 1 subfamily. In terms of assembly, homodimer.

It localises to the cytoplasm. It catalyses the reaction tRNA(Asx) + L-aspartate + ATP = L-aspartyl-tRNA(Asx) + AMP + diphosphate. Its function is as follows. Aspartyl-tRNA synthetase with relaxed tRNA specificity since it is able to aspartylate not only its cognate tRNA(Asp) but also tRNA(Asn). Reaction proceeds in two steps: L-aspartate is first activated by ATP to form Asp-AMP and then transferred to the acceptor end of tRNA(Asp/Asn). This Burkholderia pseudomallei (strain 668) protein is Aspartate--tRNA(Asp/Asn) ligase.